A 174-amino-acid polypeptide reads, in one-letter code: Balbiani ring protein 1 (174 aa).

Residues K28 to R174 form a disordered region. 8 consecutive repeat copies span residues E42–E52, K53–E63, K64–E74, K75–E85, E124–E134, K135–E145, K146–E156, and K157–E167. 2 4 X 11 AA tandem repeats regions span residues E42 to E85 and E124 to E167. Composition is skewed to basic and acidic residues over residues P49–A100 and R121–S159.

Salivary gland.

The protein localises to the secreted. Used by the larvae to construct a supramolecular structure, the larval tube. The polypeptide is Balbiani ring protein 1 (BR1) (Chironomus tentans (Midge)).